The chain runs to 648 residues: Phosphatidylinositol-3,5-bisphosphate 3-phosphatase MTMR14 (648 aa).

Residues 1 to 19 (MAGARAAAAASAGSTASSG) are compositionally biased toward low complexity. Positions 1–27 (MAGARAAAAASAGSTASSGSPPPQEPG) are disordered. Lys193 is subject to N6-acetyllysine. 2 N-linked (GlcNAc...) asparagine glycosylation sites follow: Asn225 and Asn240. The active-site Phosphocysteine intermediate is the Cys329. A 1,2-diacyl-sn-glycero-3-phospho-(1D-myo-inositol-3,5-bisphosphate) is bound by residues Gly332, Trp333, Asp334, Arg335, and Arg381. Positions 332, 333, 334, 335, and 381 each coordinate a 1,2-diacyl-sn-glycero-3-phospho-(1D-myo-inositol-3-phosphate). Positions 471–544 (PTQAAWRKSH…PRSVDHPLPG (74 aa)) are disordered. Basic and acidic residues predominate over residues 494 to 506 (PSEERLPSHHGLT). Phosphoserine is present on Ser516. Asn517 carries N-linked (GlcNAc...) asparagine glycosylation. A phosphoserine mark is found at Ser528, Ser578, and Ser622. Arg636 is subject to Omega-N-methylarginine.

Belongs to the protein-tyrosine phosphatase family. Non-receptor class myotubularin subfamily.

Its subcellular location is the cytoplasm. It carries out the reaction a 1,2-diacyl-sn-glycero-3-phospho-(1D-myo-inositol-3,5-bisphosphate) + H2O = a 1,2-diacyl-sn-glycero-3-phospho-(1D-myo-inositol-5-phosphate) + phosphate. It catalyses the reaction a 1,2-diacyl-sn-glycero-3-phospho-(1D-myo-inositol-3-phosphate) + H2O = a 1,2-diacyl-sn-glycero-3-phospho-(1D-myo-inositol) + phosphate. Lipid phosphatase that specifically dephosphorylates the D-3 position of phosphatidylinositol 3-phosphate and phosphatidylinositol 3,5-bisphosphate, generating phosphatidylinositol and phosphatidylinositol 5-phosphate. The sequence is that of Phosphatidylinositol-3,5-bisphosphate 3-phosphatase MTMR14 from Mus musculus (Mouse).